Reading from the N-terminus, the 234-residue chain is Mitochondrial assembly of ribosomal large subunit protein 1 (234 aa).

The disordered stretch occupies residues 63–88; that stretch reads SEPGLEERAEGTVNEGRPESDAADHT.

This sequence belongs to the Iojap/RsfS family. As to quaternary structure, associates with the mitochondrial ribosome large subunit (39S) via interaction with MRPL12 and/or MRPL14. The interaction generates steric hindrance that is expected to prevent premature association of the 28S and 39S ribosomal subunits. Interacts with intermediates of the mitochondrial ribosome large subunit (mt-LSU) (recruits the mitochondrial ribosome and complex I assembly factor AltMIEF1 and NDUFAB1); regulates mitochondrial ribosomes assembly. Interacts with MRPL12 and MRPL14.

It localises to the mitochondrion matrix. Functionally, required for normal mitochondrial ribosome function and mitochondrial translation. May play a role in ribosome biogenesis by preventing premature association of the 28S and 39S ribosomal subunits. Interacts with mitochondrial ribosomal protein uL14m (MRPL14), probably blocking formation of intersubunit bridge B8, preventing association of the 28S and 39S ribosomal subunits. Addition to isolated mitochondrial ribosomal subunits partially inhibits translation, probably by interfering with the association of the 28S and 39S ribosomal subunits and the formation of functional ribosomes. May also participate in the assembly and/or regulation of the stability of the large subunit of the mitochondrial ribosome. May function as a ribosomal silencing factor. The chain is Mitochondrial assembly of ribosomal large subunit protein 1 (MALSU1) from Homo sapiens (Human).